The chain runs to 557 residues: MKAILRASRIGRVILRYRLDALLEGTPAERWLRLAKPFVPRASAEIAAQSRGARLRLALQELGPIFVKFGQILSTRRDLIPPDVAEELTLLQDRVKPFDGEAARLIVERALGLPVSVAFAAFDTTPLASASIAQVHAATLPPDANGLRREVVVKVLRPDIERQIDADIALLHSLATLVERTHPRADKIRPREVVAEIEGTLSAELDLQREGANASVLRRFWEGSDDLYVPEVIWSHTAERALTLERVYGIPSDDVAKLDAAGIDRKALAAKGVRVFYTQVFRDNFFHADAHAGNIWVDSDPERRLNPRFIALDFGIMGQLSQEDQYYLAENFMAIFHKDYRRMAELHVEAGWMPSNVRIDELEAAARSVCEPYFTRPLSEISLAEVLIKLFRVAQRYELTLQPQLILLQKTLLNIEGVGRQLDPKLDIWAVARPVLERILRERYSPRRVLGELRKRLPEIMTHAPDMPRLVHSWLKQQVEGRHQLDIRSSELRALDLSLRKLQTRVVTAITGSGLLVVAAVLYGLHPDGWYLGTVPVWSWISGGAGSAALLIAWLRR.

The 389-residue stretch at 121-509 (AFDTTPLASA…RKLQTRVVTA (389 aa)) folds into the Protein kinase domain. ATP is bound by residues 127-135 (LASASIAQV) and Lys-154. Residue Asp-289 is the Proton acceptor of the active site. Transmembrane regions (helical) follow at residues 506 to 526 (VVTA…YGLH) and 535 to 555 (VPVW…IAWL).

This sequence belongs to the ABC1 family. UbiB subfamily.

The protein resides in the cell inner membrane. The protein operates within cofactor biosynthesis; ubiquinone biosynthesis [regulation]. Its function is as follows. Is probably a protein kinase regulator of UbiI activity which is involved in aerobic coenzyme Q (ubiquinone) biosynthesis. The protein is Probable protein kinase UbiB of Xanthomonas campestris pv. campestris (strain 8004).